The primary structure comprises 266 residues: Electron transfer flavoprotein subunit beta (266 aa).

This sequence belongs to the ETF beta-subunit/FixA family. Heterodimer of an alpha and a beta subunit. The cofactor is FAD. Requires AMP as cofactor.

In terms of biological role, the electron transfer flavoprotein serves as a specific electron acceptor for other dehydrogenases. It transfers the electrons to the main respiratory chain via ETF-ubiquinone oxidoreductase (ETF dehydrogenase). The chain is Electron transfer flavoprotein subunit beta (etfB) from Mycobacterium leprae (strain TN).